Reading from the N-terminus, the 770-residue chain is Signal transducer and activator of transcription 3 (770 aa).

An N-acetylalanine modification is found at alanine 2. An N6-acetyllysine mark is found at lysine 49 and lysine 87. The Essential for nuclear import signature appears at 150-162 (DVRKRVQDLEQKM). The 91-residue stretch at 580 to 670 (WNEGYIMGFI…DATNILVSPL (91 aa)) folds into the SH2 domain. Lysine 601, lysine 615, and lysine 631 each carry allysine; alternate. An N6-acetyllysine; alternate mark is found at lysine 601, lysine 615, and lysine 631. Tyrosine 640 is modified (phosphotyrosine; by TYK2). Lysine 685 carries the allysine; alternate modification. Lysine 685 carries the post-translational modification N6-acetyllysine; alternate. Phosphotyrosine; by FER and PTK6 is present on tyrosine 705. The residue at position 707 (lysine 707) is an N6-acetyllysine. A Phosphothreonine modification is found at threonine 714. Phosphoserine; by DYRK2, NLK, NEK6, IRAK1, RPS6KA5, ZIPK/DAPK3 and PKC/PRKCE is present on serine 727.

This sequence belongs to the transcription factor STAT family. As to quaternary structure, forms a homodimer or a heterodimer with a related family member (at least STAT1). Component of a promoter-binding complex composed of STAT3, NFATC3 and NFATC4; complex formation is enhanced by calcineurin. Interacts with IL31RA, NCOA1, PELP1, SIPAR, SOCS7, STATIP1 and TMF1. Interacts with IL23R in presence of IL23. Interacts (via SH2 domain) with NLK. Interacts with ARL2BP; the interaction is enhanced by LIF and JAK1 expression. Interacts with KPNA4 and KPNA5; KPNA4 may be the primary mediator of nuclear import. Interacts with CAV2; the interaction is increased on insulin-induced tyrosine phosphorylation of CAV2 and leads to STAT3 activation. Interacts with ARL2BP; interaction is enhanced with ARL2. Interacts with NEK6. Binds to CDK9 when activated and nuclear. Interacts with BMX. Interacts with ZIPK/DAPK3. Interacts with PIAS3; the interaction occurs on stimulation by IL6, CNTF or OSM and inhibits the DNA binding activity of STAT3. In prostate cancer cells, interacts with PRKCE and promotes DNA binding activity of STAT3. Interacts with STMN3, antagonizing its microtubule-destabilizing activity. Interacts with the 'Lys-129' acetylated form of BIRC5/survivin. Interacts with FER. Interacts (via SH2 domain) with EIF2AK2/PKR (via the kinase catalytic domain). Interacts with FGFR4. Interacts with INPP5F; the interaction is independent of STAT3 Tyr-705 phosphorylation status. Interacts with OCIAD1 and OCIAD2. Interacts (unphosphorylated or phosphorylated at Ser-727) with PHB1. Interacts and may form heterodimers with NHLH1. Found in a complex with SLC39A6, SLC39A10 and with the 'Ser-727' phosphorylated form of STAT3 throughout mitosis. Interacts (when acetylated) with EP300 (via bromo domain); interaction takes place following STAT3 acetylation by EP300 and promotes enhanceosome assembly. Interacts (when acetylated) with BRD2 (via bromo domain); interaction promotes STAT3 recruitment to chromatin and T-helper Th17 cell differentiation. Interacts with FAM220A/SIPAR; the interaction occurs in both the nucleus and the cytoplasm, is enhanced by IL6 and promotes STAT3 dephosphorylation. Interacts in both unphosphorylated and phosphorylated forms with FAM220A but interacts preferentially in the phosphorylated form in the nucleus. Interacts with PTPN2; the interaction is promoted by FAM220A and leads to STAT3 dephosphorylation which negatively regulates STAT3 transcriptional activator activity. Post-translationally, activated through tyrosine phosphorylation by BMX. Tyrosine phosphorylated in response to IL6, IL11, CNTF, LIF, KITLG/SCF, CSF1, EGF, PDGF, IFN-alpha and OSM. Activated KIT promotes phosphorylation on tyrosine residues and subsequent translocation to the nucleus. Tyrosine phosphorylated in response to constitutively activated FGFR1, FGFR2, FGFR3 and FGFR4. Phosphorylated on serine upon DNA damage, probably by ATM or ATR. Serine phosphorylation is important for the formation of stable DNA-binding STAT3 homodimers and maximal transcriptional activity. ARL2BP may participate in keeping the phosphorylated state of STAT3 within the nucleus. Tyrosine phosphorylated upon stimulation with EGF. Upon LPS challenge, phosphorylated within the nucleus by IRAK1. Phosphorylated on Ser-727 by RPS6KA5. Dephosphorylation on tyrosine residues by PTPN2 negatively regulates IL6/interleukin-6 signaling. Phosphorylation at Tyr-705 by FER, isoform M2 of PKM (PKM2) or PTK6 leads to an increase of its transcriptional activity. Phosphorylation at Tyr-705 is increased in the presence of calcineurin. Phosphorylation at Tyr-640 by TYK2 negatively regulates transcriptional activity. Acetylated on lysine residues by EP300/p300, promoting its activation. Acetylation at Lys-49 and Lys-87 by EP300/p300 promotes its activation. Acetylation at Lys-87 by EP300/p300 promotes its association with BRD2 and recruitment to chromatin. Deacetylated at Lys-49 and Lys-87 by HDAC1. Acetylation at Lys-685 by EP300/p300 promotes its homodimerization and activation. Deacetylated at Lys-685 by HDAC3. Acetylated on lysine residues by CREBBP. Deacetylation by LOXL3 leads to disrupt STAT3 dimerization and inhibit STAT3 transcription activity. Oxidation of lysine residues to allysine on STAT3 preferentially takes place on lysine residues that are acetylated. In terms of processing, some lysine residues are oxidized to allysine by LOXL3, leading to disrupt STAT3 dimerization and inhibit STAT3 transcription activity. Oxidation of lysine residues to allysine on STAT3 preferentially takes place on lysine residues that are acetylated. In terms of tissue distribution, detected in lung, heart, oviduct, ovary, uterus and kidney (at protein level). Expressed in cardiomyocytes (at protein level). Detected in ovary, oviduct, and at lower levels in uterus and lung.

The protein localises to the cytoplasm. Its subcellular location is the nucleus. In terms of biological role, signal transducer and transcription activator that mediates cellular responses to interleukins, KITLG/SCF, LEP and other growth factors. Once activated, recruits coactivators, such as NCOA1 or MED1, to the promoter region of the target gene. May mediate cellular responses to activated FGFR1, FGFR2, FGFR3 and FGFR4. Upon activation of IL6ST/gp130 signaling by interleukin-6 (IL6), binds to the IL6-responsive elements identified in the promoters of various acute-phase protein genes. Activated by IL31 through IL31RA. Acts as a regulator of inflammatory response by regulating differentiation of naive CD4(+) T-cells into T-helper Th17 or regulatory T-cells (Treg): acetylation promotes its transcription activity and cell differentiation while deacetylation and oxidation of lysine residues by LOXL3 inhibits differentiation. Involved in cell cycle regulation by inducing the expression of key genes for the progression from G1 to S phase, such as CCND1. Mediates the effects of LEP on melanocortin production, body energy homeostasis and lactation. May play an apoptotic role by transctivating BIRC5 expression under LEP activation. Cytoplasmic STAT3 represses macroautophagy by inhibiting EIF2AK2/PKR activity. Plays a crucial role in basal beta cell functions, such as regulation of insulin secretion. Following JAK/STAT signaling activation and as part of a complex with NFATC3 and NFATC4, binds to the alpha-beta E4 promoter region of CRYAB and activates transcription in cardiomyocytes. Plays an important role in host defense in methicillin-resistant S.aureus lung infection by regulating the expression of the antimicrobial lectin REG3G. The sequence is that of Signal transducer and activator of transcription 3 (Stat3) from Rattus norvegicus (Rat).